The chain runs to 322 residues: Phosphatidylserine decarboxylase proenzyme (322 aa).

Active-site charge relay system; for autoendoproteolytic cleavage activity residues include aspartate 90, histidine 147, and serine 254. Serine 254 acts as the Schiff-base intermediate with substrate; via pyruvic acid; for decarboxylase activity in catalysis. At serine 254 the chain carries Pyruvic acid (Ser); by autocatalysis. The interval 296 to 322 (EPAPLPAEEIKAEHDASPLVDNKKDDT) is disordered. Positions 303–322 (EEIKAEHDASPLVDNKKDDT) are enriched in basic and acidic residues.

Belongs to the phosphatidylserine decarboxylase family. PSD-B subfamily. Prokaryotic type I sub-subfamily. As to quaternary structure, heterodimer of a large membrane-associated beta subunit and a small pyruvoyl-containing alpha subunit. Pyruvate is required as a cofactor. Post-translationally, is synthesized initially as an inactive proenzyme. Formation of the active enzyme involves a self-maturation process in which the active site pyruvoyl group is generated from an internal serine residue via an autocatalytic post-translational modification. Two non-identical subunits are generated from the proenzyme in this reaction, and the pyruvate is formed at the N-terminus of the alpha chain, which is derived from the carboxyl end of the proenzyme. The autoendoproteolytic cleavage occurs by a canonical serine protease mechanism, in which the side chain hydroxyl group of the serine supplies its oxygen atom to form the C-terminus of the beta chain, while the remainder of the serine residue undergoes an oxidative deamination to produce ammonia and the pyruvoyl prosthetic group on the alpha chain. During this reaction, the Ser that is part of the protease active site of the proenzyme becomes the pyruvoyl prosthetic group, which constitutes an essential element of the active site of the mature decarboxylase.

It is found in the cell membrane. It carries out the reaction a 1,2-diacyl-sn-glycero-3-phospho-L-serine + H(+) = a 1,2-diacyl-sn-glycero-3-phosphoethanolamine + CO2. It participates in phospholipid metabolism; phosphatidylethanolamine biosynthesis; phosphatidylethanolamine from CDP-diacylglycerol: step 2/2. In terms of biological role, catalyzes the formation of phosphatidylethanolamine (PtdEtn) from phosphatidylserine (PtdSer). This Salmonella dublin (strain CT_02021853) protein is Phosphatidylserine decarboxylase proenzyme.